Consider the following 828-residue polypeptide: Glycerol-3-phosphate acyltransferase (828 aa).

The short motif at 309-314 (CHRSHI) is the HXXXXD motif element.

Belongs to the GPAT/DAPAT family.

It is found in the cell inner membrane. It catalyses the reaction sn-glycerol 3-phosphate + an acyl-CoA = a 1-acyl-sn-glycero-3-phosphate + CoA. It functions in the pathway phospholipid metabolism; CDP-diacylglycerol biosynthesis; CDP-diacylglycerol from sn-glycerol 3-phosphate: step 1/3. This chain is Glycerol-3-phosphate acyltransferase, found in Pseudomonas entomophila (strain L48).